A 400-amino-acid chain; its full sequence is Dehydrogenase efuE (400 aa).

NAD(+) contacts are provided by residues 222–223 (AI), 303–305 (TAR), and aspartate 329. Arginine 305 is an active-site residue. Glutamate 334 is a catalytic residue. Histidine 352 acts as the Proton donor in catalysis. 352–355 (HLGG) provides a ligand contact to NAD(+).

The protein belongs to the D-isomer specific 2-hydroxyacid dehydrogenase family.

Its pathway is secondary metabolite biosynthesis; terpenoid biosynthesis. In terms of biological role, dehydrogenase; part of the gene cluster that mediates the biosynthesis of enfumafungin, a glycosylated fernene-type triterpenoid with potent antifungal activity, mediated by its interaction with beta-1,3-glucan synthase and the fungal cell wall. The pathway begins with the terpene cyclase-glycosyl transferase fusion protein that most likely uses 2,3-oxidosqualene as substrate and catalyzes glycosylation immediately after cyclization. The fernene glycoside then could be processed by the desaturase efuI which catalyzes isomerization of a double bond established by efuA to form the core structure. The latter would then undergo a series of hydroxylations in unknown order at C-2, C-19, C-23 and C-25, which would be catalyzed by two of the three cytochrome P450 monooxygenases efuB, efuG or efuH. The hydroxy-group at C-25 becomes oxidized by the dehydrogenase efuE to enable a spontaneous, non-enzymatic hemiacetal formation with C-23. After hydroxylation at C-2, acetylation by the acetyltransferase efuC takes place. The final steps in enfumafungin biosynthesis require expansion of the 5-membered ring by lactonization via a Baeyer-Villiger reaction mediated by one of the BGC's cytochrome P450 monooxygenases (efuB, efuG or efuH) followed by ring cleavage. This type of reaction would establish a double bond between C-20 and C-21 which could be reduced by the reductase efuL to form the final product. The polypeptide is Dehydrogenase efuE (Hormonema carpetanum).